We begin with the raw amino-acid sequence, 316 residues long: Ribosomal RNA small subunit methyltransferase H (316 aa).

S-adenosyl-L-methionine is bound by residues 35–37 (SGH), aspartate 55, phenylalanine 84, aspartate 105, and glutamine 112.

This sequence belongs to the methyltransferase superfamily. RsmH family.

The protein localises to the cytoplasm. It carries out the reaction cytidine(1402) in 16S rRNA + S-adenosyl-L-methionine = N(4)-methylcytidine(1402) in 16S rRNA + S-adenosyl-L-homocysteine + H(+). Functionally, specifically methylates the N4 position of cytidine in position 1402 (C1402) of 16S rRNA. The polypeptide is Ribosomal RNA small subunit methyltransferase H (Streptococcus pyogenes serotype M4 (strain MGAS10750)).